Here is a 134-residue protein sequence, read N- to C-terminus: ATP synthase epsilon chain (134 aa).

The protein belongs to the ATPase epsilon chain family. F-type ATPases have 2 components, CF(1) - the catalytic core - and CF(0) - the membrane proton channel. CF(1) has five subunits: alpha(3), beta(3), gamma(1), delta(1), epsilon(1). CF(0) has three main subunits: a, b and c.

Its subcellular location is the cell membrane. Produces ATP from ADP in the presence of a proton gradient across the membrane. The protein is ATP synthase epsilon chain of Alkaliphilus oremlandii (strain OhILAs) (Clostridium oremlandii (strain OhILAs)).